Here is a 486-residue protein sequence, read N- to C-terminus: Small ribosomal subunit protein uS4m (486 aa).

The S4 RNA-binding domain occupies 103–172 (KRLDFALFRA…AKKPSFQEAL (70 aa)).

It belongs to the universal ribosomal protein uS4 family. Component of the mitochondrial small ribosomal subunit (mt-SSU). Mature yeast 74S mitochondrial ribosomes consist of a small (37S) and a large (54S) subunit. The 37S small subunit contains a 15S ribosomal RNA (15S mt-rRNA) and 34 different proteins. The 54S large subunit contains a 21S rRNA (21S mt-rRNA) and 46 different proteins. uS3m, uS4m and uS5m form the narrow entry site of the mRNA channel.

The protein resides in the mitochondrion. Functionally, component of the mitochondrial ribosome (mitoribosome), a dedicated translation machinery responsible for the synthesis of mitochondrial genome-encoded proteins, including at least some of the essential transmembrane subunits of the mitochondrial respiratory chain. The mitoribosomes are attached to the mitochondrial inner membrane and translation products are cotranslationally integrated into the membrane. The sequence is that of Small ribosomal subunit protein uS4m (NAM9) from Saccharomyces cerevisiae (strain ATCC 204508 / S288c) (Baker's yeast).